The primary structure comprises 398 residues: Acetate kinase (398 aa).

Asparagine 7 contributes to the Mg(2+) binding site. Lysine 14 is an ATP binding site. Arginine 91 serves as a coordination point for substrate. The Proton donor/acceptor role is filled by aspartate 148. ATP contacts are provided by residues histidine 208 to glycine 212, aspartate 283 to arginine 285, and glycine 331 to asparagine 335. Glutamate 384 contacts Mg(2+).

Belongs to the acetokinase family. Homodimer. The cofactor is Mg(2+). Mn(2+) is required as a cofactor.

The protein resides in the cytoplasm. It carries out the reaction acetate + ATP = acetyl phosphate + ADP. The protein operates within metabolic intermediate biosynthesis; acetyl-CoA biosynthesis; acetyl-CoA from acetate: step 1/2. In terms of biological role, catalyzes the formation of acetyl phosphate from acetate and ATP. Can also catalyze the reverse reaction. This chain is Acetate kinase, found in Phocaeicola vulgatus (strain ATCC 8482 / DSM 1447 / JCM 5826 / CCUG 4940 / NBRC 14291 / NCTC 11154) (Bacteroides vulgatus).